Reading from the N-terminus, the 88-residue chain is ADDKNPLEECFREDDYEEFLEIAKNGLKKTSNPKHIVYPVKPSEQLYEESLRDQLPTSMHRYPSMIQKIFFAGEYTANAHGWIDSTIK.

Residues E74 and 81–86 (GWIDST) contribute to the FAD site. Residue 81-82 (GW) coordinates substrate.

It belongs to the flavin monoamine oxidase family. FIG1 subfamily. Homodimer; non-covalently linked. FAD serves as cofactor. In terms of processing, N-glycosylated. As to expression, expressed by the venom gland.

The protein localises to the secreted. The catalysed reaction is an L-alpha-amino acid + O2 + H2O = a 2-oxocarboxylate + H2O2 + NH4(+). The enzyme catalyses L-leucine + O2 + H2O = 4-methyl-2-oxopentanoate + H2O2 + NH4(+). It carries out the reaction L-phenylalanine + O2 + H2O = 3-phenylpyruvate + H2O2 + NH4(+). It catalyses the reaction L-tryptophan + O2 + H2O = indole-3-pyruvate + H2O2 + NH4(+). The catalysed reaction is L-methionine + O2 + H2O = 4-methylsulfanyl-2-oxobutanoate + H2O2 + NH4(+). The enzyme catalyses L-isoleucine + O2 + H2O = (S)-3-methyl-2-oxopentanoate + H2O2 + NH4(+). It carries out the reaction L-arginine + O2 + H2O = 5-guanidino-2-oxopentanoate + H2O2 + NH4(+). It catalyses the reaction L-histidine + O2 + H2O = 3-(imidazol-5-yl)pyruvate + H2O2 + NH4(+). The catalysed reaction is L-asparagine + O2 + H2O = 2-oxosuccinamate + H2O2 + NH4(+). The enzyme catalyses L-valine + O2 + H2O = 3-methyl-2-oxobutanoate + H2O2 + NH4(+). It carries out the reaction L-glutamate + O2 + H2O = H2O2 + 2-oxoglutarate + NH4(+). Its function is as follows. Catalyzes an oxidative deamination of predominantly hydrophobic and aromatic L-amino acids, thus producing hydrogen peroxide that may contribute to the diverse toxic effects of this enzyme. Is highly active on L-Met, L-Leu, L-Phe, L-Ile, and L-Arg, moderately active on L-His, L-Trp, L-Asn, L-Glu, and L-Val, and weakly or not active on L-Gln, L-Lys, L-Asp, L-Ala, L-Tyr, L-Ser, L-Pro, L-Gly, L-Thr, and L-Cys. Exhibits diverse biological activities, such as hemorrhage, hemolysis, edema, apoptosis of vascular endothelial cells or tumor cell lines, antibacterial and antiparasitic activities. In addition, this protein has an ability to induce apoptosis in cultured HeLa and K562 cells, and inhibits ADP-induced platelet aggregation dose-dependently. Effects of snake L-amino oxidases on platelets are controversial, since they either induce aggregation or inhibit agonist-induced aggregation. These different effects are probably due to different experimental conditions. The polypeptide is L-amino-acid oxidase (Vipera berus berus (Common viper)).